The following is a 204-amino-acid chain: N-(5'-phosphoribosyl)anthranilate isomerase (204 aa).

Belongs to the TrpF family.

The enzyme catalyses N-(5-phospho-beta-D-ribosyl)anthranilate = 1-(2-carboxyphenylamino)-1-deoxy-D-ribulose 5-phosphate. It participates in amino-acid biosynthesis; L-tryptophan biosynthesis; L-tryptophan from chorismate: step 3/5. This chain is N-(5'-phosphoribosyl)anthranilate isomerase, found in Bacillus cereus (strain ZK / E33L).